We begin with the raw amino-acid sequence, 121 residues long: UPF0102 protein Xfasm12_1748 (121 aa).

Belongs to the UPF0102 family.

In Xylella fastidiosa (strain M12), this protein is UPF0102 protein Xfasm12_1748.